Reading from the N-terminus, the 397-residue chain is MRACINNQQIRHHNKCVILELLYRQKRANKSTLARLAQISIPAVSNILQELESEKRVVNIDDESQTRGHSSGTWLIAPEGDWTLCLNVTPTSIECQVANACLSPKGEFEYLQIDAPTPQALLSEIEKCWHRHRKLWPDHTINLALAIHGQVDPVTGVSQTMPQAPWTTPVEVKYLLEEKLGIRVMVDNDCVMLALAEKWQNNSQERDFCVINVDYGIGSSFVINEQIYRGSLYGSGQIGHTIVNPDGVVCDCGRYGCLETVASLSALKKQARVWLKSQPVSTQLDPEKLTTAQLIAAWQSGEPWITSWVDRSANAIGLSLYNFLNILNINQIWLYGRSCAFGENWLNTIIRQTGFNPFDRDEGPSVKATQIGFGQLSRAQQVLGIGYLYVEAQLRQI.

The protein belongs to the ROK (NagC/XylR) family.

This is an uncharacterized protein from Escherichia coli (strain K12).